Here is a 306-residue protein sequence, read N- to C-terminus: Palmitoyl-protein thioesterase 1 (306 aa).

Positions 1–27 are cleaved as a signal peptide; sequence MASSCSRRLLAAALLPWCCAAWALGHL. 3 disulfide bridges follow: C45/C46, C96/C128, and C152/C160. Residue S115 is part of the active site. N197, N212, and N232 each carry an N-linked (GlcNAc...) asparagine glycan. Residues D233 and H289 contribute to the active site.

Belongs to the palmitoyl-protein thioesterase family. As to quaternary structure, interacts with CLN5, ATP5F1A and ATP5F1B. In terms of processing, glycosylated. In terms of tissue distribution, highest level in testis and kidney, lower in heart, brain and lung and lowest in skeletal muscle.

It is found in the lysosome. It localises to the secreted. Its subcellular location is the golgi apparatus. The protein localises to the endoplasmic reticulum. It carries out the reaction S-hexadecanoyl-L-cysteinyl-[protein] + H2O = L-cysteinyl-[protein] + hexadecanoate + H(+). It catalyses the reaction hexadecanoyl-CoA + H2O = hexadecanoate + CoA + H(+). The catalysed reaction is S-hexadecanoyl-N-acetylcysteamine + H2O = N-acetylcysteamine + hexadecanoate + H(+). The enzyme catalyses S-hexadecanoyl-N-acetylcysteine methyl ester + H2O = N-acetylcysteine methyl ester + hexadecanoate + H(+). In terms of biological role, has thioesterase activity against fatty acid thioesters with 14 -18 carbons, including palmitoyl-CoA, S-palmitoyl-N-acetylcysteamine, and palmitoylated proteins. In contrast to PPT2, PPT1 can hydrolyze palmitoylated proteins and palmitoylcysteine. This chain is Palmitoyl-protein thioesterase 1 (Ppt1), found in Mus musculus (Mouse).